The following is a 346-amino-acid chain: MALKSKLVSLLFLIATLSSTFAASFSDSDSDSDLLNELVSLRSTSESGVIHLDDHGISKFLTSASTPRPYSLLVFFDATQLHSKNELRLQELRREFGIVSASFLANNNGSEGTKLFFCEIEFSKSQSSFQLFGVNALPHIRLVSPSISNLRDESGQMDQSDYSRLAESMAEFVEQRTKLKVGPIQRPPLLSKPQIGIIVALIVIATPFIIKRVLKGETILHDTRLWLSGAIFIYFFSVAGTMHNIIRKMPMFLQDRNDPNKLVFFYQGSGMQLGAEGFAVGFLYTVVGLLLAFVTNVLVRVKNITAQRLIMLLALFISFWAVKKVVYLDNWKTGYGIHPYWPSSWR.

Positions 1 to 22 (MALKSKLVSLLFLIATLSSTFA) are cleaved as a signal peptide. Residues 23–189 (ASFSDSDSDS…KVGPIQRPPL (167 aa)) lie on the Lumenal side of the membrane. N-linked (GlcNAc...) asparagine glycosylation is present at Asn-108. The chain crosses the membrane as a helical span at residues 190 to 210 (LSKPQIGIIVALIVIATPFII). Topologically, residues 211-225 (KRVLKGETILHDTRL) are cytoplasmic. Residues 226–246 (WLSGAIFIYFFSVAGTMHNII) traverse the membrane as a helical segment. Residues 247–277 (RKMPMFLQDRNDPNKLVFFYQGSGMQLGAEG) are Lumenal-facing. Residues 278 to 298 (FAVGFLYTVVGLLLAFVTNVL) form a helical membrane-spanning segment. At 299–308 (VRVKNITAQR) the chain is on the cytoplasmic side. A helical transmembrane segment spans residues 309–329 (LIMLLALFISFWAVKKVVYLD). Topologically, residues 330–346 (NWKTGYGIHPYWPSSWR) are lumenal.

The protein belongs to the OST3/OST6 family. In terms of assembly, component of the oligosaccharyltransferase (OST) complex.

The protein resides in the endoplasmic reticulum membrane. Functionally, subunit of the oligosaccharyl transferase (OST) complex that catalyzes the initial transfer of a defined glycan (Glc(3)Man(9)GlcNAc(2) in eukaryotes) from the lipid carrier dolichol-pyrophosphate to an asparagine residue within an Asn-X-Ser/Thr consensus motif in nascent polypeptide chains, the first step in protein N-glycosylation. N-glycosylation occurs cotranslationally and the complex associates with the Sec61 complex at the channel-forming translocon complex that mediates protein translocation across the endoplasmic reticulum (ER). All subunits are required for a maximal enzyme activity. The chain is Probable dolichyl-diphosphooligosaccharide--protein glycosyltransferase subunit 3B (OST3B) from Arabidopsis thaliana (Mouse-ear cress).